A 418-amino-acid chain; its full sequence is Queuine tRNA-ribosyltransferase accessory subunit 2 (418 aa).

Zn(2+)-binding residues include Cys-325, Cys-327, Cys-330, and His-356.

This sequence belongs to the queuine tRNA-ribosyltransferase family. QTRT2 subfamily. Heterodimer of a catalytic subunit and an accessory subunit. It depends on Zn(2+) as a cofactor.

It is found in the cytoplasm. Its function is as follows. Non-catalytic subunit of the queuine tRNA-ribosyltransferase (TGT) that catalyzes the base-exchange of a guanine (G) residue with queuine (Q) at position 34 (anticodon wobble position) in tRNAs with GU(N) anticodons (tRNA-Asp, -Asn, -His and -Tyr), resulting in the hypermodified nucleoside queuosine (7-(((4,5-cis-dihydroxy-2-cyclopenten-1-yl)amino)methyl)-7-deazaguanosine). The polypeptide is Queuine tRNA-ribosyltransferase accessory subunit 2 (Drosophila melanogaster (Fruit fly)).